A 394-amino-acid polypeptide reads, in one-letter code: Elongation factor Tu (394 aa).

Positions Lys10–Glu204 constitute a tr-type G domain. Positions Gly19–Thr26 are G1. Gly19–Thr26 provides a ligand contact to GTP. Residue Thr26 participates in Mg(2+) binding. Residues Gly60 to Asn64 are G2. The tract at residues Asp81–Gly84 is G3. GTP-binding positions include Asp81–His85 and Asn136–Asp139. A G4 region spans residues Asn136–Asp139. Residues Ser174–Leu176 form a G5 region.

This sequence belongs to the TRAFAC class translation factor GTPase superfamily. Classic translation factor GTPase family. EF-Tu/EF-1A subfamily. In terms of assembly, monomer.

The protein localises to the cytoplasm. It carries out the reaction GTP + H2O = GDP + phosphate + H(+). GTP hydrolase that promotes the GTP-dependent binding of aminoacyl-tRNA to the A-site of ribosomes during protein biosynthesis. The chain is Elongation factor Tu from Shewanella denitrificans (strain OS217 / ATCC BAA-1090 / DSM 15013).